A 286-amino-acid polypeptide reads, in one-letter code: AB hydrolase superfamily protein YfhM (286 aa).

An AB hydrolase-1 domain is found at 27 to 272 (PLIVLLHGFP…ASHWINHEKP (246 aa)). Aspartate 103 functions as the Nucleophile in the catalytic mechanism. The active-site Proton donor is tyrosine 210. The active-site Proton acceptor is histidine 265.

This sequence belongs to the AB hydrolase superfamily. Epoxide hydrolase family.

The sequence is that of AB hydrolase superfamily protein YfhM (yfhM) from Bacillus subtilis (strain 168).